A 218-amino-acid polypeptide reads, in one-letter code: GTP cyclohydrolase 1 (218 aa).

Zn(2+) is bound by residues C111, H114, and C182.

This sequence belongs to the GTP cyclohydrolase I family. Toroid-shaped homodecamer, composed of two pentamers of five dimers.

The catalysed reaction is GTP + H2O = 7,8-dihydroneopterin 3'-triphosphate + formate + H(+). It functions in the pathway cofactor biosynthesis; 7,8-dihydroneopterin triphosphate biosynthesis; 7,8-dihydroneopterin triphosphate from GTP: step 1/1. This chain is GTP cyclohydrolase 1, found in Buchnera aphidicola subsp. Schizaphis graminum (strain Sg).